Consider the following 564-residue polypeptide: Dihydropyrimidinase-related protein 5 (564 aa).

Phosphothreonine is present on residues T509 and T514. Phosphoserine is present on residues S532 and S538. At R559 the chain carries Omega-N-methylarginine.

The protein belongs to the metallo-dependent hydrolases superfamily. Hydantoinase/dihydropyrimidinase family. In terms of assembly, homotetramer, and heterotetramer with other DPYS-like proteins. Interacts with DPYSL2, DPYSL3 and DPYSL4. Interacts with MAP2 and TUBB3. In terms of tissue distribution, highly expressed in embryonic and early postnatal brain and spinal cord.

The protein localises to the cytoplasm. Functionally, involved in the negative regulation of dendrite outgrowth. The protein is Dihydropyrimidinase-related protein 5 (Dpysl5) of Rattus norvegicus (Rat).